The sequence spans 293 residues: 33 kDa chaperonin (293 aa).

Disulfide bonds link cysteine 230–cysteine 232 and cysteine 263–cysteine 266.

It belongs to the HSP33 family. Under oxidizing conditions two disulfide bonds are formed involving the reactive cysteines. Under reducing conditions zinc is bound to the reactive cysteines and the protein is inactive.

It localises to the cytoplasm. Functionally, redox regulated molecular chaperone. Protects both thermally unfolding and oxidatively damaged proteins from irreversible aggregation. Plays an important role in the bacterial defense system toward oxidative stress. This is 33 kDa chaperonin from Edwardsiella ictaluri (strain 93-146).